The following is a 269-amino-acid chain: 4-chlorobenzoyl coenzyme A dehalogenase (269 aa).

Substrate-binding positions include Arg-24 and 62 to 67 (AGFYLR). His-90 (proton acceptor) is an active-site residue. Position 114 (Gly-114) interacts with substrate. Asp-145 functions as the Nucleophile in the catalytic mechanism. Residue Arg-257 coordinates substrate.

It belongs to the enoyl-CoA hydratase/isomerase family. In terms of assembly, homotetramer. Homotetramer, homooctamer and larger multimers. Homotrimer.

The catalysed reaction is 4-chlorobenzoyl-CoA + H2O = 4-hydroxybenzoyl-CoA + chloride + H(+). It participates in xenobiotic degradation; 4-chlorobenzoate degradation; 4-hydroxybenzoate from 4-chlorobenzoate: step 2/3. Inactivated by 1 mM Ag(+) and by 5 mM Cu(2+). Partially inhibited by 5 mM Zn(2+), Mn(2+), Co(2+), Fe(2+) and Ni(2+). Unaffected by 10 mM Na(+), K(+) and Li(+) and by 0.5 mM Mg(2+), Mn(2+), Fe(2+), Ca(2+), Co(2+) and Zn(2+). Inhibited by the sulfhydryl blocking agent 5,5'-dithio-bis-(2-nitrobenzoate), SDS and N-bromosuccinimide. Unaffected by sodium azide and EDTA. Inactivated following treatment with diethyl pyrocarbonate; this inactivation is reversible by treatment with hydroxylamine. Its function is as follows. Dehalogenates 4-chlorobenzoyl-CoA, 4-iodobenzoyl-CoA and 4-bromobenzoyl-CoA, but not 4-fluorobenzoyl-CoA. Inactive towards crotonyl-CoA, alpha-methylcrotonyl-CoA and beta-methylcrotonyl-CoA. This is 4-chlorobenzoyl coenzyme A dehalogenase from Pseudomonas sp. (strain CBS-3).